The primary structure comprises 450 residues: Phosphoglucosamine mutase (450 aa).

The active-site Phosphoserine intermediate is Ser101. Mg(2+)-binding residues include Ser101, Asp240, Asp242, and Asp244. Ser101 is subject to Phosphoserine.

The protein belongs to the phosphohexose mutase family. It depends on Mg(2+) as a cofactor. Activated by phosphorylation. Phosphorylated by StkP in vivo.

The enzyme catalyses alpha-D-glucosamine 1-phosphate = D-glucosamine 6-phosphate. Its function is as follows. Catalyzes the conversion of glucosamine-6-phosphate to glucosamine-1-phosphate. The sequence is that of Phosphoglucosamine mutase from Streptococcus pneumoniae (strain ATCC BAA-255 / R6).